Consider the following 294-residue polypeptide: tRNA dimethylallyltransferase (294 aa).

ATP is bound at residue 10–17 (GPTAVGKT). 12–17 (TAVGKT) is a binding site for substrate. The tract at residues 35-38 (DSQQ) is interaction with substrate tRNA.

This sequence belongs to the IPP transferase family. Monomer. Requires Mg(2+) as cofactor.

The enzyme catalyses adenosine(37) in tRNA + dimethylallyl diphosphate = N(6)-dimethylallyladenosine(37) in tRNA + diphosphate. Its function is as follows. Catalyzes the transfer of a dimethylallyl group onto the adenine at position 37 in tRNAs that read codons beginning with uridine, leading to the formation of N6-(dimethylallyl)adenosine (i(6)A). The polypeptide is tRNA dimethylallyltransferase (Streptococcus mutans serotype c (strain ATCC 700610 / UA159)).